Here is an 84-residue protein sequence, read N- to C-terminus: Sulfur carrier protein TusA (84 aa).

C19 functions as the Cysteine persulfide intermediate in the catalytic mechanism.

The protein belongs to the sulfur carrier protein TusA family. Interacts with IscS.

It localises to the cytoplasm. The protein operates within tRNA modification. In terms of biological role, sulfur carrier protein involved in sulfur trafficking in the cell. Part of a sulfur-relay system required for 2-thiolation during synthesis of 2-thiouridine of the modified wobble base 5-methylaminomethyl-2-thiouridine (mnm(5)s(2)U) in tRNA. Interacts with IscS and stimulates its cysteine desulfurase activity. Accepts an activated sulfur from IscS, which is then transferred to TusD, and thus determines the direction of sulfur flow from IscS to 2-thiouridine formation. Also appears to be involved in sulfur transfer for the biosynthesis of molybdopterin. The chain is Sulfur carrier protein TusA from Yersinia enterocolitica serotype O:8 / biotype 1B (strain NCTC 13174 / 8081).